The following is a 191-amino-acid chain: Amelogenin, X isoform (191 aa).

An N-terminal signal peptide occupies residues 1 to 16; sequence MGTWILFACLLGAAFA. Serine 32 carries the post-translational modification Phosphoserine. Low complexity predominate over residues 95-117; sequence IPQQPMMPVPGQHSMTPIQHHQP. The disordered stretch occupies residues 95–191; it reads IPQQPMMPVP…TDKTKREEVD (97 aa). Residues 118-171 are compositionally biased toward pro residues; that stretch reads NLPPPAQQPYQPQPVQPQPHQPMQPQPPVHPMQPLPPQPPLPPMFPMQPLPPML.

Belongs to the amelogenin family. Interacts with KRT5. Phosphorylated by FAM20C in vitro.

Its subcellular location is the secreted. The protein resides in the extracellular space. The protein localises to the extracellular matrix. Functionally, plays a role in biomineralization. Seems to regulate the formation of crystallites during the secretory stage of tooth enamel development. Thought to play a major role in the structural organization and mineralization of developing enamel. The chain is Amelogenin, X isoform (AMELX) from Homo sapiens (Human).